The chain runs to 106 residues: BLOC-1-related complex subunit 7 (106 aa).

The protein belongs to the BORCS7 family. Component of the BLOC-one-related complex (BORC) which is composed of BLOC1S1, BLOC1S2, BORCS5, BORCS6, BORCS7, BORCS8, KXD1 and SNAPIN.

The protein resides in the lysosome membrane. Its function is as follows. As part of the BORC complex may play a role in lysosomes movement and localization at the cell periphery. Associated with the cytosolic face of lysosomes, the BORC complex may recruit ARL8B and couple lysosomes to microtubule plus-end-directed kinesin motor. The chain is BLOC-1-related complex subunit 7 from Pongo abelii (Sumatran orangutan).